The primary structure comprises 845 residues: Beta-glucosidase (845 aa).

An N-linked (GlcNAc...) asparagine glycan is attached at N66. The active site involves D225. Residues N304, N438, and N621 are each glycosylated (N-linked (GlcNAc...) asparagine). One can recognise a PA14 domain in the interval A408–A568.

This sequence belongs to the glycosyl hydrolase 3 family. In terms of assembly, homotetramer.

The catalysed reaction is Hydrolysis of terminal, non-reducing beta-D-glucosyl residues with release of beta-D-glucose.. The protein operates within glycan metabolism; cellulose degradation. The chain is Beta-glucosidase from Kluyveromyces marxianus (Yeast).